A 395-amino-acid polypeptide reads, in one-letter code: Phosphoribulokinase, chloroplastic (395 aa).

The transit peptide at 1–46 (MAVSTIYSTQALNSTHFLTSSSSSKQVFLYRRQPQTNRRFNTLITC) directs the protein to the chloroplast. The cysteines at positions 61 and 100 are disulfide-linked.

This sequence belongs to the phosphoribulokinase family.

It localises to the plastid. The protein resides in the chloroplast. It carries out the reaction D-ribulose 5-phosphate + ATP = D-ribulose 1,5-bisphosphate + ADP + H(+). It participates in carbohydrate biosynthesis; Calvin cycle. With respect to regulation, light regulated via thioredoxin by reversible oxidation/reduction of sulfhydryl/disulfide groups. This Arabidopsis thaliana (Mouse-ear cress) protein is Phosphoribulokinase, chloroplastic.